A 29-amino-acid chain; its full sequence is uncharacterized protein (29 aa).

Its subcellular location is the plastid. It localises to the chloroplast. This is an uncharacterized protein from Trieres chinensis (Marine centric diatom).